A 124-amino-acid chain; its full sequence is Large ribosomal subunit protein bL12 (124 aa).

Residues Gly-93–Lys-124 form a disordered region. The span at Gly-101 to Glu-116 shows a compositional bias: basic and acidic residues.

It belongs to the bacterial ribosomal protein bL12 family. In terms of assembly, homodimer. Part of the ribosomal stalk of the 50S ribosomal subunit. Forms a multimeric L10(L12)X complex, where L10 forms an elongated spine to which 2 to 4 L12 dimers bind in a sequential fashion. Binds GTP-bound translation factors.

Its function is as follows. Forms part of the ribosomal stalk which helps the ribosome interact with GTP-bound translation factors. Is thus essential for accurate translation. This Marinobacter nauticus (strain ATCC 700491 / DSM 11845 / VT8) (Marinobacter aquaeolei) protein is Large ribosomal subunit protein bL12.